The primary structure comprises 314 residues: Methylglutaconyl-CoA hydratase, mitochondrial (314 aa).

Residues methionine 1–tyrosine 42 constitute a mitochondrion transit peptide. Lysine 75 carries the post-translational modification N6-acetyllysine; alternate. Lysine 75 is modified (N6-succinyllysine; alternate). The interval lysine 80–lysine 94 is RNA-binding. At lysine 84 the chain carries N6-succinyllysine. N6-acetyllysine; alternate occurs at positions 88 and 119. N6-succinyllysine; alternate is present on residues lysine 88 and lysine 119. N6-succinyllysine is present on residues lysine 123 and lysine 135. An N6-acetyllysine; alternate mark is found at lysine 179 and lysine 186. N6-succinyllysine; alternate occurs at positions 179 and 186. Position 304 is an N6-succinyllysine (lysine 304).

The protein belongs to the enoyl-CoA hydratase/isomerase family. Homohexamer. In terms of tissue distribution, detected in heart, brain, liver, spleen, skeletal muscle and kidney. Expressed in brain, kidney, liver and spleen tissue (at protein level).

The protein resides in the mitochondrion. It carries out the reaction (3S)-3-hydroxy-3-methylglutaryl-CoA = 3-methyl-(2E)-glutaconyl-CoA + H2O. It catalyses the reaction (3S)-citramalyl-CoA = itaconyl-CoA + H2O. The catalysed reaction is 3-hydroxyisovaleryl-CoA = 3-methylbut-2-enoyl-CoA + H2O. The enzyme catalyses (S)-3-hydroxyglutaryl-CoA = (2E)-glutaconyl-CoA + H2O. Its pathway is amino-acid degradation; L-leucine degradation; (S)-3-hydroxy-3-methylglutaryl-CoA from 3-isovaleryl-CoA: step 3/3. Catalyzes the fifth step in the leucine degradation pathway, the reversible hydration of 3-methylglutaconyl-CoA (3-MG-CoA) to 3-hydroxy-3-methylglutaryl-CoA (HMG-CoA). Can catalyze the reverse reaction but at a much lower rate in vitro. HMG-CoA is then quickly degraded by another enzyme (such as HMG-CoA lyase) to give acetyl-CoA and acetoacetate. Uses other substrates such as (2E)-glutaconyl-CoA efficiently in vitro, and to a lesser extent 3-methylcrotonyl-CoA (3-methyl-(2E)-butenoyl-CoA), crotonyl-CoA ((2E)-butenoyl-CoA) and 3-hydroxybutanoyl-CoA (the missing carboxylate reduces affinity to the active site). Originally it was identified as an RNA-binding protein as it binds to AU-rich elements (AREs) in vitro. AREs direct rapid RNA degradation and mRNA deadenylation. Might have itaconyl-CoA hydratase activity, converting itaconyl-CoA into citramalyl-CoA in the C5-dicarboxylate catabolism pathway. The C5-dicarboxylate catabolism pathway is required to detoxify itaconate, an antimicrobial metabolite and immunomodulator produced by macrophages during certain infections, that can act as a vitamin B12-poisoning metabolite. The chain is Methylglutaconyl-CoA hydratase, mitochondrial (Auh) from Mus musculus (Mouse).